Reading from the N-terminus, the 354-residue chain is Maturase K (354 aa).

This sequence belongs to the intron maturase 2 family. MatK subfamily.

The protein resides in the plastid. Its subcellular location is the chloroplast. Usually encoded in the trnK tRNA gene intron. Probably assists in splicing its own and other chloroplast group II introns. The protein is Maturase K (matK) of Hydrangea quercifolia (Oakleaf hydrangea).